The following is a 126-amino-acid chain: Protein ApaG (126 aa).

The ApaG domain maps to 2-126 (DVIQPCIKIQ…FRLAIPNVLN (125 aa)).

The polypeptide is Protein ApaG (Vibrio campbellii (strain ATCC BAA-1116)).